We begin with the raw amino-acid sequence, 373 residues long: Chaperone protein DnaJ (373 aa).

Residues 4 to 68 (NYYQILGVSK…QKRAAYDRLG (65 aa)) form the J domain. A CR-type zinc finger spans residues 136–214 (GIEKNISFSS…CHGMGRYHKQ (79 aa)). Zn(2+) contacts are provided by cysteine 149, cysteine 152, cysteine 166, cysteine 169, cysteine 188, cysteine 191, cysteine 202, and cysteine 205. CXXCXGXG motif repeat units lie at residues 149–156 (CDTCHGSG), 166–173 (CDACSGVG), 188–195 (CHKCQGNG), and 202–209 (CKKCHGMG).

This sequence belongs to the DnaJ family. In terms of assembly, homodimer. The cofactor is Zn(2+).

Its subcellular location is the cytoplasm. Its function is as follows. Participates actively in the response to hyperosmotic and heat shock by preventing the aggregation of stress-denatured proteins and by disaggregating proteins, also in an autonomous, DnaK-independent fashion. Unfolded proteins bind initially to DnaJ; upon interaction with the DnaJ-bound protein, DnaK hydrolyzes its bound ATP, resulting in the formation of a stable complex. GrpE releases ADP from DnaK; ATP binding to DnaK triggers the release of the substrate protein, thus completing the reaction cycle. Several rounds of ATP-dependent interactions between DnaJ, DnaK and GrpE are required for fully efficient folding. Also involved, together with DnaK and GrpE, in the DNA replication of plasmids through activation of initiation proteins. In Rickettsia africae (strain ESF-5), this protein is Chaperone protein DnaJ.